A 291-amino-acid chain; its full sequence is Ribosomal protein L11 methyltransferase (291 aa).

Thr136, Gly159, Asp181, and Asn228 together coordinate S-adenosyl-L-methionine.

The protein belongs to the methyltransferase superfamily. PrmA family.

It localises to the cytoplasm. It catalyses the reaction L-lysyl-[protein] + 3 S-adenosyl-L-methionine = N(6),N(6),N(6)-trimethyl-L-lysyl-[protein] + 3 S-adenosyl-L-homocysteine + 3 H(+). Functionally, methylates ribosomal protein L11. The chain is Ribosomal protein L11 methyltransferase from Rhizobium meliloti (strain 1021) (Ensifer meliloti).